We begin with the raw amino-acid sequence, 1657 residues long: Putative serine/threonine-protein kinase/receptor R826 (1657 aa).

A signal peptide spans 1-23; it reads MRLNSQIVFCIVVVISCLSMIEC. N-linked (GlcNAc...) asparagine; by host glycans are attached at residues N153, N178, N238, N255, N352, N454, N476, N494, and N596. The chain crosses the membrane as a helical span at residues 742-762; sequence IILAVVIPIAFIIVCIICILV. One can recognise a Protein kinase 1 domain in the interval 786-1049; the sequence is LELGEQLGTG…EIMTRLSNLM (264 aa). ATP-binding positions include 792-800 and K813; that span reads LGTGAFGEV. D909 serves as the catalytic Proton acceptor. The tract at residues 1089 to 1115 is disordered; it reads VQNSYNRTDSYDLGSNNSHSSITSDTN. In terms of domain architecture, Guanylate cyclase spans 1134–1277; sequence VVVFTDIISA…PTVTTAAAVT (144 aa). The Protein kinase 2 domain maps to 1399–1651; it reads IKMGEQIGLG…DDVIIVLAKF (253 aa). ATP-binding positions include 1405 to 1413 and K1426; that span reads IGLGSYGVV. D1522 (proton acceptor) is an active-site residue.

The protein localises to the membrane. The enzyme catalyses L-seryl-[protein] + ATP = O-phospho-L-seryl-[protein] + ADP + H(+). The catalysed reaction is L-threonyl-[protein] + ATP = O-phospho-L-threonyl-[protein] + ADP + H(+). This is Putative serine/threonine-protein kinase/receptor R826 from Acanthamoeba polyphaga mimivirus (APMV).